A 258-amino-acid chain; its full sequence is Glutamate racemase (258 aa).

Substrate is bound by residues 11–12 and 43–44; these read DS and YG. The active-site Proton donor/acceptor is the Cys-74. 75-76 contacts substrate; sequence NT. The active-site Proton donor/acceptor is the Cys-187. 188-189 serves as a coordination point for substrate; the sequence is TH.

The protein belongs to the aspartate/glutamate racemases family.

It carries out the reaction L-glutamate = D-glutamate. The protein operates within cell wall biogenesis; peptidoglycan biosynthesis. Its function is as follows. Provides the (R)-glutamate required for cell wall biosynthesis. This is Glutamate racemase from Bifidobacterium adolescentis (strain ATCC 15703 / DSM 20083 / NCTC 11814 / E194a).